The primary structure comprises 822 residues: Cation/H(+) antiporter 3 (822 aa).

Transmembrane regions (helical) follow at residues 55-75, 116-136, 150-170, 190-210, 224-244, 274-294, 305-325, 331-351, 362-382, 388-408, 418-438, and 447-467; these read FPHLQMIFLIISFLWQFLHFF, EIVFSLTAACSYMMFWFLMGV, AITIGLSSVLLSTLVCSVIFF, YVVIYSIQCLSSFPVVGNLLF, ISSAVISDFSTSILASVLIFM, IVVLFVCIAIYVFRPLMFYII, AIYLSTIIVMVSGSAILANWC, MGPFILGLAVPHGPPLGSAII, FLPFFIASSSTEIDISALFGW, IILIMVTSFVVKFIFTTVPAL, FALSLIMSFKGIFELGAYALA, and ETFTVACLYITLNSAIIPPIL.

It belongs to the monovalent cation:proton antiporter 2 (CPA2) transporter (TC 2.A.37) family. CHX (TC 2.A.37.4) subfamily.

The protein localises to the membrane. In terms of biological role, may operate as a cation/H(+) antiporter. In Arabidopsis thaliana (Mouse-ear cress), this protein is Cation/H(+) antiporter 3 (CHX3).